The primary structure comprises 636 residues: LDL receptor repeat-containing protein egg-1 (636 aa).

Residues 1–130 (MSSIAQKNRN…NHSNLFQCPS (130 aa)) lie on the Cytoplasmic side of the membrane. Residues 131 to 151 (VAIVLVLALVILGVLAAIPLT) form a helical; Signal-anchor for type II membrane protein membrane-spanning segment. Over 152 to 636 (LMLTSSAQKM…VLKNSGRFPY (485 aa)) the chain is Extracellular. An N-linked (GlcNAc...) asparagine glycan is attached at N202. 8 LDL-receptor class A domains span residues 205 to 243 (TCSG…ENCK), 244 to 296 (ECQS…AMCK), 298 to 335 (TCSK…NNCN), 336 to 375 (KCQK…QQCD), 378 to 415 (TCSG…ENCP), 457 to 499 (KCHP…KNCT), 503 to 541 (ECGI…QNCS), and 542 to 579 (QCAS…LKCS). Intrachain disulfides connect C213–C233, C227–C242, C245–C273, C251–C286, C280–C295, C299–C312, C306–C325, C319–C334, C337–C365, C359–C374, C379–C392, C387–C405, C399–C414, C458–C476, C466–C489, C483–C498, C504–C518, C514–C531, C525–C540, C543–C556, C550–C569, and C563–C578. N508 carries N-linked (GlcNAc...) asparagine glycosylation. An N-linked (GlcNAc...) asparagine glycan is attached at N614.

The protein resides in the cell membrane. Functionally, probable receptor which is required for the oocyte-to-zygote transition although its exact function is controversial. Seems to be required for fertilization probably by promoting the interaction or fusion between sperm and oocyte. Conversely, shown to be dispensable for fertilization but required for the formation of a continuous and cohesive eggshell chitin layer by maintaining a homogenous distribution of chitin synthase chs-1 at the unfertilized oocyte cell membrane. Appears to recruit or maintain together to the unfertilized oocyte cortex several proteins including chs-1, kinase mbk-2 and pseudophosphatases egg-3, and possibly egg-4 and egg-5. The protein is LDL receptor repeat-containing protein egg-1 of Caenorhabditis briggsae.